Reading from the N-terminus, the 119-residue chain is MNLAAYFPVLLFLIVGTGLGVALVSIGKILGPNKPDTEKNAPYECGFEAFEDARMKFDVRYYLVAILFIIFDLETAFLFPWGVALRDIGWPGFMAMMIFLLEFLLGFAYIWKKGGLDWE.

Helical transmembrane passes span 7–27, 63–83, and 88–108; these read FPVL…VSIG, LVAI…PWGV, and IGWP…LGFA.

This sequence belongs to the complex I subunit 3 family. As to quaternary structure, NDH-1 is composed of 14 different subunits. Subunits NuoA, H, J, K, L, M, N constitute the membrane sector of the complex.

The protein localises to the cell inner membrane. The enzyme catalyses a quinone + NADH + 5 H(+)(in) = a quinol + NAD(+) + 4 H(+)(out). Its function is as follows. NDH-1 shuttles electrons from NADH, via FMN and iron-sulfur (Fe-S) centers, to quinones in the respiratory chain. The immediate electron acceptor for the enzyme in this species is believed to be ubiquinone. Couples the redox reaction to proton translocation (for every two electrons transferred, four hydrogen ions are translocated across the cytoplasmic membrane), and thus conserves the redox energy in a proton gradient. The protein is NADH-quinone oxidoreductase subunit A of Paraburkholderia xenovorans (strain LB400).